The following is a 149-amino-acid chain: Deoxyuridine 5'-triphosphate nucleotidohydrolase (149 aa).

Substrate-binding positions include arginine 68–glycine 70, asparagine 81, and leucine 85–aspartate 87.

This sequence belongs to the dUTPase family. Requires Mg(2+) as cofactor.

It catalyses the reaction dUTP + H2O = dUMP + diphosphate + H(+). The protein operates within pyrimidine metabolism; dUMP biosynthesis; dUMP from dCTP (dUTP route): step 2/2. In terms of biological role, this enzyme is involved in nucleotide metabolism: it produces dUMP, the immediate precursor of thymidine nucleotides and it decreases the intracellular concentration of dUTP so that uracil cannot be incorporated into DNA. The chain is Deoxyuridine 5'-triphosphate nucleotidohydrolase from Azoarcus sp. (strain BH72).